A 338-amino-acid polypeptide reads, in one-letter code: Fructose-1,6-bisphosphatase 1 (338 aa).

N-acetylalanine is present on A2. Residues 18-22 (VMEQG) and 28-32 (TGELT) contribute to the AMP site. 2 residues coordinate Mg(2+): D69 and E98. 113-114 (KY) contacts AMP. Positions 119, 121, and 122 each coordinate Mg(2+). 122-125 (DGSS) contacts substrate. R141 contacts AMP. K151 is subject to N6-succinyllysine. Residues 213–216 (NEGY), 244–249 (RYVGSM), Y265, and 275–277 (KLR) contribute to the substrate site. A phosphotyrosine mark is found at Y216, Y245, and Y265. Position 281 (E281) interacts with Mg(2+).

It belongs to the FBPase class 1 family. Homotetramer. The cofactor is Mg(2+). As to expression, detected in pancreatic beta-cell lines MIN6 and beta-TC and in liver (at protein level). Preferentially expressed in liver, with lower levels detected in pancreatic islets and intestine, and very low levels in blood, muscle, brain and spleen.

The enzyme catalyses beta-D-fructose 1,6-bisphosphate + H2O = beta-D-fructose 6-phosphate + phosphate. It participates in carbohydrate biosynthesis; gluconeogenesis. With respect to regulation, subject to complex allosteric regulation. The enzyme can assume an active R-state, or an inactive T-state. Intermediate conformations may exist. AMP acts as an allosteric inhibitor. AMP binding affects the turnover of bound substrate and not the affinity for substrate. Fructose 2,6-bisphosphate acts as a competitive inhibitor. Fructose 2,6-bisphosphate and AMP have synergistic effects. Functionally, catalyzes the hydrolysis of fructose 1,6-bisphosphate to fructose 6-phosphate in the presence of divalent cations, acting as a rate-limiting enzyme in gluconeogenesis. Plays a role in regulating glucose sensing and insulin secretion of pancreatic beta-cells. Appears to modulate glycerol gluconeogenesis in liver. Important regulator of appetite and adiposity; increased expression of the protein in liver after nutrient excess increases circulating satiety hormones and reduces appetite-stimulating neuropeptides and thus seems to provide a feedback mechanism to limit weight gain. The protein is Fructose-1,6-bisphosphatase 1 (Fbp1) of Mus musculus (Mouse).